Reading from the N-terminus, the 357-residue chain is Membrane-bound lytic murein transglycosylase C (357 aa).

Residues 1–16 (MKKMLALLVIAPLLVS) form the signal peptide. A lipid anchor (N-palmitoyl cysteine) is attached at Cys17. Cys17 carries S-diacylglycerol cysteine lipidation.

It belongs to the transglycosylase Slt family.

It is found in the cell outer membrane. The catalysed reaction is Exolytic cleavage of the (1-&gt;4)-beta-glycosidic linkage between N-acetylmuramic acid (MurNAc) and N-acetylglucosamine (GlcNAc) residues in peptidoglycan, from either the reducing or the non-reducing ends of the peptidoglycan chains, with concomitant formation of a 1,6-anhydrobond in the MurNAc residue.. Functionally, murein-degrading enzyme. May play a role in recycling of muropeptides during cell elongation and/or cell division. This is Membrane-bound lytic murein transglycosylase C from Pectobacterium atrosepticum (strain SCRI 1043 / ATCC BAA-672) (Erwinia carotovora subsp. atroseptica).